A 390-amino-acid polypeptide reads, in one-letter code: L-seryl-tRNA(Sec) selenium transferase (390 aa).

Lys-225 is subject to N6-(pyridoxal phosphate)lysine.

Belongs to the SelA family. Requires pyridoxal 5'-phosphate as cofactor.

It localises to the cytoplasm. It catalyses the reaction L-seryl-tRNA(Sec) + selenophosphate + H(+) = L-selenocysteinyl-tRNA(Sec) + phosphate. It participates in aminoacyl-tRNA biosynthesis; selenocysteinyl-tRNA(Sec) biosynthesis; selenocysteinyl-tRNA(Sec) from L-seryl-tRNA(Sec) (bacterial route): step 1/1. Its function is as follows. Converts seryl-tRNA(Sec) to selenocysteinyl-tRNA(Sec) required for selenoprotein biosynthesis. In Helicobacter pylori (strain J99 / ATCC 700824) (Campylobacter pylori J99), this protein is L-seryl-tRNA(Sec) selenium transferase.